A 107-amino-acid polypeptide reads, in one-letter code: uncharacterized protein (107 aa).

The signal sequence occupies residues 1-34 (MRLQWPKFITFLSTGSCCLLFLLLPCSFFPLPTA).

This is an uncharacterized protein from Saccharomyces cerevisiae (strain ATCC 204508 / S288c) (Baker's yeast).